The sequence spans 319 residues: Porphobilinogen deaminase 1 (319 aa).

Cysteine 244 is subject to S-(dipyrrolylmethanemethyl)cysteine.

The protein belongs to the HMBS family. In terms of assembly, monomer. Dipyrromethane serves as cofactor.

The catalysed reaction is 4 porphobilinogen + H2O = hydroxymethylbilane + 4 NH4(+). It functions in the pathway porphyrin-containing compound metabolism; protoporphyrin-IX biosynthesis; coproporphyrinogen-III from 5-aminolevulinate: step 2/4. Tetrapolymerization of the monopyrrole PBG into the hydroxymethylbilane pre-uroporphyrinogen in several discrete steps. The polypeptide is Porphobilinogen deaminase 1 (hemC1) (Streptomyces coelicolor (strain ATCC BAA-471 / A3(2) / M145)).